A 70-amino-acid polypeptide reads, in one-letter code: Sec-independent protein translocase protein TatA (70 aa).

A helical transmembrane segment spans residues methionine 1–glycine 21. The segment at aspartate 46 to serine 70 is disordered.

Belongs to the TatA/E family. As to quaternary structure, the Tat system comprises two distinct complexes: a TatABC complex, containing multiple copies of TatA, TatB and TatC subunits, and a separate TatA complex, containing only TatA subunits. Substrates initially bind to the TatABC complex, which probably triggers association of the separate TatA complex to form the active translocon.

The protein localises to the cell inner membrane. In terms of biological role, part of the twin-arginine translocation (Tat) system that transports large folded proteins containing a characteristic twin-arginine motif in their signal peptide across membranes. TatA could form the protein-conducting channel of the Tat system. The polypeptide is Sec-independent protein translocase protein TatA (Thiobacillus denitrificans (strain ATCC 25259 / T1)).